Here is a 159-residue protein sequence, read N- to C-terminus: ATP synthase subunit b (159 aa).

The helical transmembrane segment at 8–28 (ILATIINFIILILILKHFFWD) threads the bilayer.

The protein belongs to the ATPase B chain family. F-type ATPases have 2 components, F(1) - the catalytic core - and F(0) - the membrane proton channel. F(1) has five subunits: alpha(3), beta(3), gamma(1), delta(1), epsilon(1). F(0) has three main subunits: a(1), b(2) and c(10-14). The alpha and beta chains form an alternating ring which encloses part of the gamma chain. F(1) is attached to F(0) by a central stalk formed by the gamma and epsilon chains, while a peripheral stalk is formed by the delta and b chains.

The protein localises to the cell membrane. F(1)F(0) ATP synthase produces ATP from ADP in the presence of a proton or sodium gradient. F-type ATPases consist of two structural domains, F(1) containing the extramembraneous catalytic core and F(0) containing the membrane proton channel, linked together by a central stalk and a peripheral stalk. During catalysis, ATP synthesis in the catalytic domain of F(1) is coupled via a rotary mechanism of the central stalk subunits to proton translocation. Its function is as follows. Component of the F(0) channel, it forms part of the peripheral stalk, linking F(1) to F(0). The protein is ATP synthase subunit b of Clostridium perfringens (strain SM101 / Type A).